The sequence spans 200 residues: Proteasome subunit beta 2 (200 aa).

A propeptide spans 1–10 (removed in mature form; by autocatalysis); that stretch reads MSDQLELMTG. Catalysis depends on threonine 11, which acts as the Nucleophile.

Belongs to the peptidase T1B family. As to quaternary structure, the 20S proteasome core is composed of 14 alpha and 14 beta subunits that assemble into four stacked heptameric rings, resulting in a barrel-shaped structure. The two inner rings, each composed of seven catalytic beta subunits, are sandwiched by two outer rings, each composed of seven alpha subunits. The catalytic chamber with the active sites is on the inside of the barrel. Has a gated structure, the ends of the cylinder being occluded by the N-termini of the alpha-subunits. Is capped at one or both ends by the proteasome regulatory ATPase, PAN.

Its subcellular location is the cytoplasm. The enzyme catalyses Cleavage of peptide bonds with very broad specificity.. With respect to regulation, the formation of the proteasomal ATPase PAN-20S proteasome complex, via the docking of the C-termini of PAN into the intersubunit pockets in the alpha-rings, triggers opening of the gate for substrate entry. Interconversion between the open-gate and close-gate conformations leads to a dynamic regulation of the 20S proteasome proteolysis activity. Functionally, component of the proteasome core, a large protease complex with broad specificity involved in protein degradation. In Caldivirga maquilingensis (strain ATCC 700844 / DSM 13496 / JCM 10307 / IC-167), this protein is Proteasome subunit beta 2.